Here is a 180-residue protein sequence, read N- to C-terminus: Crossover junction endodeoxyribonuclease RuvC (180 aa).

Active-site residues include Asp-7, Glu-66, and Asp-138. 3 residues coordinate Mg(2+): Asp-7, Glu-66, and Asp-138.

It belongs to the RuvC family. As to quaternary structure, homodimer which binds Holliday junction (HJ) DNA. The HJ becomes 2-fold symmetrical on binding to RuvC with unstacked arms; it has a different conformation from HJ DNA in complex with RuvA. In the full resolvosome a probable DNA-RuvA(4)-RuvB(12)-RuvC(2) complex forms which resolves the HJ. It depends on Mg(2+) as a cofactor.

Its subcellular location is the cytoplasm. It catalyses the reaction Endonucleolytic cleavage at a junction such as a reciprocal single-stranded crossover between two homologous DNA duplexes (Holliday junction).. Functionally, the RuvA-RuvB-RuvC complex processes Holliday junction (HJ) DNA during genetic recombination and DNA repair. Endonuclease that resolves HJ intermediates. Cleaves cruciform DNA by making single-stranded nicks across the HJ at symmetrical positions within the homologous arms, yielding a 5'-phosphate and a 3'-hydroxyl group; requires a central core of homology in the junction. The consensus cleavage sequence is 5'-(A/T)TT(C/G)-3'. Cleavage occurs on the 3'-side of the TT dinucleotide at the point of strand exchange. HJ branch migration catalyzed by RuvA-RuvB allows RuvC to scan DNA until it finds its consensus sequence, where it cleaves and resolves the cruciform DNA. In Burkholderia orbicola (strain AU 1054), this protein is Crossover junction endodeoxyribonuclease RuvC.